Reading from the N-terminus, the 293-residue chain is uncharacterized protein (293 aa).

2 disordered regions span residues 1 to 95 (MFLR…KDKA) and 268 to 293 (EETA…GRAL). A phosphoserine mark is found at Ser34, Ser35, and Ser89. Composition is skewed to basic and acidic residues over residues 85–95 (KRMDSLKKDKA) and 277–286 (GQGKEAKEQT).

This is an uncharacterized protein from Rattus norvegicus (Rat).